The primary structure comprises 88 residues: Small ribosomal subunit protein uS15c (88 aa).

The protein belongs to the universal ribosomal protein uS15 family. Part of the 30S ribosomal subunit.

It is found in the plastid. The protein localises to the chloroplast. This chain is Small ribosomal subunit protein uS15c (rps15), found in Calycanthus floridus var. glaucus (Eastern sweetshrub).